Here is a 522-residue protein sequence, read N- to C-terminus: Maturase K (522 aa).

This sequence belongs to the intron maturase 2 family. MatK subfamily.

The protein localises to the plastid. The protein resides in the chloroplast. Functionally, usually encoded in the trnK tRNA gene intron. Probably assists in splicing its own and other chloroplast group II introns. The sequence is that of Maturase K from Pillansia templemannii.